Here is a 488-residue protein sequence, read N- to C-terminus: 3-octaprenyl-4-hydroxybenzoate carboxy-lyase (488 aa).

Position 172 (Asn172) interacts with Mn(2+). Prenylated FMN-binding positions include 175 to 177 (IYR), 189 to 191 (RWL), and 194 to 195 (RG). Glu238 is a binding site for Mn(2+). The Proton donor role is filled by Asp287.

Belongs to the UbiD family. Homohexamer. The cofactor is prenylated FMN. Mn(2+) serves as cofactor.

The protein resides in the cell membrane. It catalyses the reaction a 4-hydroxy-3-(all-trans-polyprenyl)benzoate + H(+) = a 2-(all-trans-polyprenyl)phenol + CO2. It functions in the pathway cofactor biosynthesis; ubiquinone biosynthesis. Functionally, catalyzes the decarboxylation of 3-octaprenyl-4-hydroxy benzoate to 2-octaprenylphenol, an intermediate step in ubiquinone biosynthesis. This is 3-octaprenyl-4-hydroxybenzoate carboxy-lyase from Pseudomonas syringae pv. tomato (strain ATCC BAA-871 / DC3000).